Here is a 164-residue protein sequence, read N- to C-terminus: Phosphopantetheine adenylyltransferase (164 aa).

Residue Ser-9 participates in substrate binding. ATP-binding positions include 9–10 and His-17; that span reads SF. Residues Lys-41, Val-78, and Arg-92 each contribute to the substrate site. Residues 93–95, Glu-103, and 128–134 contribute to the ATP site; these read GLR and SRPITAT.

This sequence belongs to the bacterial CoaD family. In terms of assembly, homohexamer. The cofactor is Mg(2+).

The protein localises to the cytoplasm. The catalysed reaction is (R)-4'-phosphopantetheine + ATP + H(+) = 3'-dephospho-CoA + diphosphate. It functions in the pathway cofactor biosynthesis; coenzyme A biosynthesis; CoA from (R)-pantothenate: step 4/5. Functionally, reversibly transfers an adenylyl group from ATP to 4'-phosphopantetheine, yielding dephospho-CoA (dPCoA) and pyrophosphate. The sequence is that of Phosphopantetheine adenylyltransferase from Rhizobium leguminosarum bv. trifolii (strain WSM2304).